A 466-amino-acid chain; its full sequence is Vimentin (466 aa).

2 stretches are compositionally biased toward low complexity: residues 1–13 (MSTRTVSSSSYRR) and 20–31 (TASRPSSSRSYV). The interval 1 to 31 (MSTRTVSSSSYRRMFGGPGTASRPSSSRSYV) is disordered. An N-acetylserine modification is found at S2. The segment at 2-95 (STRTVSSSSY…FSLADAINTE (94 aa)) is head. The residue at position 7 (S7) is a Phosphoserine; alternate. S7 is a glycosylation site (O-linked (GlcNAc) serine; alternate). 3 positions are modified to phosphoserine: S8, S9, and S10. Position 20 is a phosphothreonine (T20). S25 and S26 each carry phosphoserine. The O-linked (GlcNAc) threonine glycan is linked to T33. S34 carries an O-linked (GlcNAc) serine; alternate glycan. At S34 the chain carries Phosphoserine; by PKC; alternate. S39 carries the phosphoserine; by CaMK2, PKA, PKC and ROCK2 modification. Phosphoserine is present on residues S42, S47, S49, and S51. A Phosphotyrosine modification is found at Y53. A Phosphoserine modification is found at S55. Phosphoserine; by CDK5 and CDK1 is present on S56. Y61 carries the post-translational modification Phosphotyrosine. At S66 the chain carries Phosphoserine. The residue at position 72 (S72) is a Phosphoserine; by AURKB and ROCK2. S73 and S87 each carry phosphoserine. The segment at 96–131 (FKNTRTNEKVELQELNDRFANYIDKVRFLEQQNKIL) is coil 1A. The stretch at 96–131 (FKNTRTNEKVELQELNDRFANYIDKVRFLEQQNKIL) forms a coiled coil. Positions 103–411 (EKVELQELND…KLLEGEESRI (309 aa)) constitute an IF rod domain. K104 participates in a covalent cross-link: Glycyl lysine isopeptide (Lys-Gly) (interchain with G-Cter in SUMO2). At Y117 the chain carries Phosphotyrosine. An N6-acetyllysine; alternate mark is found at K120, K129, and K139. K120 and K129 each carry N6-succinyllysine; alternate. Glycyl lysine isopeptide (Lys-Gly) (interchain with G-Cter in SUMO2); alternate cross-links involve residues K120, K129, and K139. Residues 132–153 (LAELEQLKGQGKSRLGDLYEEE) form a linker 1 region. S144 carries the phosphoserine modification. Positions 154–245 (MRELRRQVDQ…KLHDEEIQEL (92 aa)) form a coiled coil. Residues 154 to 245 (MRELRRQVDQ…KLHDEEIQEL (92 aa)) are coil 1B. K168 carries the post-translational modification N6-acetyllysine. Residue K188 is modified to N6-acetyllysine; alternate. Position 188 is an N6-succinyllysine; alternate (K188). Phosphoserine is present on S214. K223 bears the N6-acetyllysine; alternate mark. Residue K223 forms a Glycyl lysine isopeptide (Lys-Gly) (interchain with G-Cter in SUMO2); alternate linkage. A Phosphoserine modification is found at S226. K235 is subject to N6-acetyllysine. The tract at residues 246-268 (QAQIQEQHVQIDMDVSKPDLTAA) is linker 12. A Glycyl lysine isopeptide (Lys-Gly) (interchain with G-Cter in SUMO2) cross-link involves residue K262. The interval 269–407 (LRDVRQQYES…ATYRKLLEGE (139 aa)) is coil 2. An N6-acetyllysine; alternate modification is found at K294. K294 carries the N6-succinyllysine; alternate modification. Residue K294 forms a Glycyl lysine isopeptide (Lys-Gly) (interchain with G-Cter in SUMO2); alternate linkage. S299 carries the post-translational modification Phosphoserine. Residues 303–407 (NRNNDALRQA…ATYRKLLEGE (105 aa)) adopt a coiled-coil conformation. A Glycyl lysine isopeptide (Lys-Gly) (interchain with G-Cter in SUMO2) cross-link involves residue K313. A Phosphoserine modification is found at S325. The short motif at 326 to 329 (LTCE) is the [IL]-x-C-x-x-[DE] motif element. An N6-acetyllysine; alternate modification is found at K373. Residue K373 forms a Glycyl lysine isopeptide (Lys-Gly) (interchain with G-Cter in SUMO2); alternate linkage. A tail region spans residues 408 to 466 (ESRISLPLPNFSSLNLRETNLESLPLVDTHSKRTLLIKTVETRDGQVINETSQHHDDLE). Phosphoserine occurs at positions 409, 412, 419, and 420. Phosphothreonine is present on T426. S430 is subject to Phosphoserine. The residue at position 436 (T436) is a Phosphothreonine. S438 carries the phosphoserine modification. A Glycyl lysine isopeptide (Lys-Gly) (interchain with G-Cter in SUMO2) cross-link involves residue K439. Residue K445 is modified to N6-acetyllysine; alternate. K445 is subject to N6-succinyllysine; alternate. A Glycyl lysine isopeptide (Lys-Gly) (interchain with G-Cter in SUMO2); alternate cross-link involves residue K445. Residue K445 forms a Glycyl lysine isopeptide (Lys-Gly) (interchain with G-Cter in SUMO1); alternate linkage. T446 and T458 each carry phosphothreonine. A Phosphoserine modification is found at S459.

Belongs to the intermediate filament family. As to quaternary structure, homomer assembled from elementary dimers. Identified in complexes that contain VIM, EZR, AHNAK, BFSP1, BFSP2, ANK2, PLEC, PRX and spectrin. Interacts with BCAS3. Interacts with LGSN. Interacts with SYNM. Interacts (via rod region) with PLEC (via CH 1 domain). Interacts with STK33. Interacts with LARP6. Interacts with RAB8B. Interacts with TOR1A; the interaction associates TOR1A with the cytoskeleton. Interacts with TOR1AIP1. Interacts with TOR1AIP1. Interacts with DIAPH1. Interacts with EPPK1; interaction is dependent of higher-order structure of intermediate filament. Interacts with the non-receptor tyrosine kinase SRMS; the interaction leads to phosphorylation of VIM. Interacts with NOD2. Interacts (via head region) with CORO1C. Interacts with HDGF. Interacts with PRKCE (via phorbol-ester/DAG-type 2 domain). Interacts with BFSP2. Interacts with PPL. Interacts with PKP1 and PKP2. Interacts with SCRIB (via PDZ domains); the interaction protects SCRIB from proteasomal degradation and facilitates SCRIB localization to intermediate filaments, the interaction is reduced by cell contact inhibition. In terms of processing, one of the most prominent phosphoproteins in various cells of mesenchymal origin. Phosphorylation is enhanced during cell division, at which time vimentin filaments are significantly reorganized. Phosphorylation by PKN1 inhibits the formation of filaments. Filament disassembly during mitosis is promoted by phosphorylation at Ser-55 as well as by nestin. Phosphorylated at Ser-56 by CDK5 during neutrophil secretion in the cytoplasm. Phosphorylated by STK33. Phosphorylated on tyrosine residues by SRMS. S-nitrosylation is induced by interferon-gamma and oxidatively-modified low-densitity lipoprotein (LDL(ox)) possibly implicating the iNOS-S100A8/9 transnitrosylase complex.

Its subcellular location is the cytoplasm. It is found in the cytoskeleton. It localises to the nucleus matrix. The protein localises to the cell membrane. Its function is as follows. Vimentins are class-III intermediate filaments found in various non-epithelial cells, especially mesenchymal cells. Vimentin is attached to the nucleus, endoplasmic reticulum, and mitochondria, either laterally or terminally. Plays a role in cell directional movement, orientation, cell sheet organization and Golgi complex polarization at the cell migration front. Protects SCRIB from proteasomal degradation and facilitates its localization to intermediate filaments in a cell contact-mediated manner. Involved with LARP6 in the stabilization of type I collagen mRNAs for CO1A1 and CO1A2. The protein is Vimentin (VIM) of Sus scrofa (Pig).